Consider the following 340-residue polypeptide: Glutaminase 2 (340 aa).

Residues S89, N140, N191, Y215, and Y267 each contribute to the substrate site.

The protein belongs to the glutaminase family. As to quaternary structure, homotetramer.

It catalyses the reaction L-glutamine + H2O = L-glutamate + NH4(+). In Yersinia pestis, this protein is Glutaminase 2.